The following is a 232-amino-acid chain: Glycerol-3-phosphate acyltransferase 4 (232 aa).

6 helical membrane-spanning segments follow: residues 4-24, 54-76, 80-99, 107-127, 143-163, and 168-188; these read VFLI…AYLL, LGLA…AGWL, LWQQ…WPVF, GIAT…LIAL, VFLG…FFGV, and TVTW…LMAP.

The protein belongs to the PlsY family. In terms of assembly, probably interacts with PlsX.

It localises to the cell membrane. The enzyme catalyses an acyl phosphate + sn-glycerol 3-phosphate = a 1-acyl-sn-glycero-3-phosphate + phosphate. The protein operates within lipid metabolism; phospholipid metabolism. Its function is as follows. Catalyzes the transfer of an acyl group from acyl-phosphate (acyl-PO(4)) to glycerol-3-phosphate (G3P) to form lysophosphatidic acid (LPA). This enzyme utilizes acyl-phosphate as fatty acyl donor, but not acyl-CoA or acyl-ACP. The protein is Glycerol-3-phosphate acyltransferase 4 of Dehalococcoides mccartyi (strain CBDB1).